The chain runs to 478 residues: Sugar transporter ERD6-like 18 (478 aa).

Transmembrane regions (helical) follow at residues 31-51, 71-91, 110-130, 133-153, 162-180, 188-208, 270-290, 306-326, 333-353, 367-387, 407-427, and 433-453; these read ITAC…SFGV, IAQF…GALF, LLCI…WLNF, ISSG…IAEI, FTFT…VYFS, ILAL…FFVP, TLVV…SAVL, IGST…VILV, PLLL…GVAF, VFTF…LGGL, IVTL…NFLL, and GTFY…WLLV.

Belongs to the major facilitator superfamily. Sugar transporter (TC 2.A.1.1) family. Expressed in leaf vasculature, stem and flowers.

Its subcellular location is the membrane. Its function is as follows. Sugar transporter. The chain is Sugar transporter ERD6-like 18 (SFP2) from Arabidopsis thaliana (Mouse-ear cress).